The sequence spans 477 residues: Ribulose bisphosphate carboxylase large chain (477 aa).

A propeptide spanning residues 1 to 2 (MS) is cleaved from the precursor. Pro3 bears the N-acetylproline mark. Residue Lys14 is modified to N6,N6,N6-trimethyllysine. 2 residues coordinate substrate: Asn123 and Thr173. Catalysis depends on Lys175, which acts as the Proton acceptor. Position 177 (Lys177) interacts with substrate. Mg(2+) is bound by residues Lys201, Asp203, and Glu204. Lys201 carries the post-translational modification N6-carboxylysine. His294 serves as the catalytic Proton acceptor. Substrate contacts are provided by Arg295, His327, and Ser379.

It belongs to the RuBisCO large chain family. Type I subfamily. In terms of assembly, heterohexadecamer of 8 large chains and 8 small chains; disulfide-linked. The disulfide link is formed within the large subunit homodimers. Mg(2+) is required as a cofactor. Post-translationally, the disulfide bond which can form in the large chain dimeric partners within the hexadecamer appears to be associated with oxidative stress and protein turnover.

The protein localises to the plastid. Its subcellular location is the chloroplast. It carries out the reaction 2 (2R)-3-phosphoglycerate + 2 H(+) = D-ribulose 1,5-bisphosphate + CO2 + H2O. The catalysed reaction is D-ribulose 1,5-bisphosphate + O2 = 2-phosphoglycolate + (2R)-3-phosphoglycerate + 2 H(+). Functionally, ruBisCO catalyzes two reactions: the carboxylation of D-ribulose 1,5-bisphosphate, the primary event in carbon dioxide fixation, as well as the oxidative fragmentation of the pentose substrate in the photorespiration process. Both reactions occur simultaneously and in competition at the same active site. This is Ribulose bisphosphate carboxylase large chain from Solanum bulbocastanum (Wild potato).